The chain runs to 126 residues: Fluoride-specific ion channel FluC (126 aa).

Transmembrane regions (helical) follow at residues 5–25 (IAVI…FALW), 34–54 (WGTL…LAVF), 67–87 (LVIT…GEVV), and 95–115 (FGLA…LTWA). Gly-74 and Thr-77 together coordinate Na(+).

This sequence belongs to the fluoride channel Fluc/FEX (TC 1.A.43) family.

The protein resides in the cell inner membrane. The catalysed reaction is fluoride(in) = fluoride(out). With respect to regulation, na(+) is not transported, but it plays an essential structural role and its presence is essential for fluoride channel function. Functionally, fluoride-specific ion channel. Important for reducing fluoride concentration in the cell, thus reducing its toxicity. This is Fluoride-specific ion channel FluC from Paracidovorax citrulli (strain AAC00-1) (Acidovorax citrulli).